The sequence spans 632 residues: Putative golgin subfamily A member 8I (632 aa).

A disordered region spans residues 1–77 (MAEETQHNKL…SSATLKDLES (77 aa)). Positions 38 to 50 (TNGSIPQTATSGG) are enriched in polar residues. Coiled-coil stretches lie at residues 86 to 154 (LDSR…HMKR) and 209 to 421 (KLEQ…SLMA). The span at 352–362 (KQEERIQEQHK) shows a compositional bias: basic and acidic residues. Disordered regions lie at residues 352–383 (KQEERIQEQHKSLQQLAKPQSVFEEPNNENKS), 423–445 (PGEGHGGEHLDSEGEEAPQPMPS), 496–524 (LSEPGGRAKDAALGGGHHQAGAQGGDEGE), and 550–569 (AHNPADEPGPGAPAPQELGA). Residues 508 to 520 (LGGGHHQAGAQGG) are compositionally biased toward gly residues. The segment at 529 to 632 (AADGIAAYSN…CWAWLPRRRR (104 aa)) is golgi-targeting domain. A compositionally biased stretch (low complexity) spans 555 to 568 (DEPGPGAPAPQELG).

It belongs to the GOLGA8 family.

The protein localises to the golgi apparatus. The protein resides in the golgi stack membrane. May be involved in maintaining Golgi structure. The protein is Putative golgin subfamily A member 8I of Homo sapiens (Human).